Consider the following 117-residue polypeptide: Large ribosomal subunit protein bL17 (117 aa).

The protein belongs to the bacterial ribosomal protein bL17 family. Part of the 50S ribosomal subunit. Contacts protein L32.

The sequence is that of Large ribosomal subunit protein bL17 from Campylobacter jejuni subsp. doylei (strain ATCC BAA-1458 / RM4099 / 269.97).